A 120-amino-acid chain; its full sequence is Putative ankyrin repeat protein RBE_1215 (120 aa).

ANK repeat units follow at residues 22-52 (DGGN…LTNI) and 59-88 (FGDT…ITSV).

This Rickettsia bellii (strain RML369-C) protein is Putative ankyrin repeat protein RBE_1215.